The sequence spans 441 residues: Tubulin beta chain, nucleomorph (441 aa).

8 residues coordinate GTP: Gln11, Glu69, Ser138, Gly142, Thr143, Gly144, Asn204, and Asn226. Glu69 is a Mg(2+) binding site.

This sequence belongs to the tubulin family. Dimer of alpha and beta chains. A typical microtubule is a hollow water-filled tube with an outer diameter of 25 nm and an inner diameter of 15 nM. Alpha-beta heterodimers associate head-to-tail to form protofilaments running lengthwise along the microtubule wall with the beta-tubulin subunit facing the microtubule plus end conferring a structural polarity. Microtubules usually have 13 protofilaments but different protofilament numbers can be found in some organisms and specialized cells. Requires Mg(2+) as cofactor.

Functionally, tubulin is the major constituent of microtubules, a cylinder consisting of laterally associated linear protofilaments composed of alpha- and beta-tubulin heterodimers. Microtubules grow by the addition of GTP-tubulin dimers to the microtubule end, where a stabilizing cap forms. Below the cap, tubulin dimers are in GDP-bound state, owing to GTPase activity of alpha-tubulin. The chain is Tubulin beta chain, nucleomorph (tubB) from Guillardia theta (Cryptophyte).